Consider the following 255-residue polypeptide: NADPH-dependent FMN reductase ArsH (255 aa).

Position 43–50 (43–50 (SLRARSFS)) interacts with FMN.

This sequence belongs to the ArsH family. In terms of assembly, homotetramer. It depends on FMN as a cofactor.

Has NADPH-dependent FMN reductase activity and very low azoreductase activity. No activity with NADH. This chain is NADPH-dependent FMN reductase ArsH, found in Shigella flexneri.